Here is a 152-residue protein sequence, read N- to C-terminus: UPF0178 protein KPK_4355 (152 aa).

It belongs to the UPF0178 family.

This is UPF0178 protein KPK_4355 from Klebsiella pneumoniae (strain 342).